Here is a 193-residue protein sequence, read N- to C-terminus: Thioredoxin reductase-like selenoprotein T1a (193 aa).

The signal sequence occupies residues Met1–Ala21. Positions Cys44–Sec47 form a cross-link, cysteinyl-selenocysteine (Cys-Sec). A non-standard amino acid (selenocysteine) is located at residue Sec47. Residues Ile83–Gly101 form a helical membrane-spanning segment.

It belongs to the SelWTH family. Selenoprotein T subfamily. In terms of processing, may contain a selenide-sulfide bond between Cys-44 and Sec-47. This bond is speculated to serve as redox-active pair. In terms of tissue distribution, expressed in embryonic olfactory vesicles and the photoreceptor cell layer of the embryonic retina. Low level in embryonic epiphysis.

The protein resides in the endoplasmic reticulum membrane. It carries out the reaction [thioredoxin]-dithiol + NADP(+) = [thioredoxin]-disulfide + NADPH + H(+). Selenoprotein with thioredoxin reductase-like oxidoreductase activity. The polypeptide is Thioredoxin reductase-like selenoprotein T1a (Danio rerio (Zebrafish)).